The primary structure comprises 273 residues: Formamidopyrimidine-DNA glycosylase (273 aa).

Pro2 (schiff-base intermediate with DNA) is an active-site residue. Glu3 functions as the Proton donor in the catalytic mechanism. Catalysis depends on Lys57, which acts as the Proton donor; for beta-elimination activity. DNA contacts are provided by His91, Arg110, and Lys151. The FPG-type zinc finger occupies 236–270; it reads QVYGRKGEACNDCGTIIEAKVIGQRNSYFCPHCQI. Arg260 serves as the catalytic Proton donor; for delta-elimination activity.

The protein belongs to the FPG family. As to quaternary structure, monomer. Requires Zn(2+) as cofactor.

It catalyses the reaction Hydrolysis of DNA containing ring-opened 7-methylguanine residues, releasing 2,6-diamino-4-hydroxy-5-(N-methyl)formamidopyrimidine.. The catalysed reaction is 2'-deoxyribonucleotide-(2'-deoxyribose 5'-phosphate)-2'-deoxyribonucleotide-DNA = a 3'-end 2'-deoxyribonucleotide-(2,3-dehydro-2,3-deoxyribose 5'-phosphate)-DNA + a 5'-end 5'-phospho-2'-deoxyribonucleoside-DNA + H(+). Involved in base excision repair of DNA damaged by oxidation or by mutagenic agents. Acts as a DNA glycosylase that recognizes and removes damaged bases. Has a preference for oxidized purines, such as 7,8-dihydro-8-oxoguanine (8-oxoG). Has AP (apurinic/apyrimidinic) lyase activity and introduces nicks in the DNA strand. Cleaves the DNA backbone by beta-delta elimination to generate a single-strand break at the site of the removed base with both 3'- and 5'-phosphates. This chain is Formamidopyrimidine-DNA glycosylase, found in Actinobacillus pleuropneumoniae serotype 7 (strain AP76).